Reading from the N-terminus, the 1006-residue chain is DNA ligase 4 (1006 aa).

Positions 1 to 36 (MDSDDDYNGPADTNPRLEDEESDLDEKYPNRPRNHS) are disordered. ATP is bound by residues Glu318, Lys320, Leu321, Arg325, Glu387, Phe427, Glu487, Lys492, Lys509, and Lys511. Catalysis depends on Lys320, which acts as the N6-AMP-lysine intermediate. A Mg(2+)-binding site is contributed by Glu387. Mg(2+) is bound at residue Glu487. BRCT domains lie at 718–811 (PSGN…PDSL) and 890–1002 (PSGW…GFQP).

Belongs to the ATP-dependent DNA ligase family. Mg(2+) serves as cofactor.

The protein resides in the nucleus. The enzyme catalyses ATP + (deoxyribonucleotide)n-3'-hydroxyl + 5'-phospho-(deoxyribonucleotide)m = (deoxyribonucleotide)n+m + AMP + diphosphate.. Its function is as follows. DNA ligase involved in DNA non-homologous end joining (NHEJ); required for double-strand break (DSB) repair. The protein is DNA ligase 4 (lig4) of Aspergillus oryzae (strain ATCC 42149 / RIB 40) (Yellow koji mold).